The primary structure comprises 199 residues: Holliday junction branch migration complex subunit RuvA (199 aa).

The tract at residues 1–63 (MIGKLNGKID…EEHIHLYGFL (63 aa)) is domain I. The tract at residues 64 to 141 (TLEEKNFFNL…TKIFSSSAII (78 aa)) is domain II. A flexible linker region spans residues 141-145 (IKDSN). The segment at 146-199 (ISSIAINEVMKALVNLGFTRFEAQNTVQGIITQNPKISIDELIKTALKNRNSSF) is domain III.

It belongs to the RuvA family. Homotetramer. Forms an RuvA(8)-RuvB(12)-Holliday junction (HJ) complex. HJ DNA is sandwiched between 2 RuvA tetramers; dsDNA enters through RuvA and exits via RuvB. An RuvB hexamer assembles on each DNA strand where it exits the tetramer. Each RuvB hexamer is contacted by two RuvA subunits (via domain III) on 2 adjacent RuvB subunits; this complex drives branch migration. In the full resolvosome a probable DNA-RuvA(4)-RuvB(12)-RuvC(2) complex forms which resolves the HJ.

It localises to the cytoplasm. Its function is as follows. The RuvA-RuvB-RuvC complex processes Holliday junction (HJ) DNA during genetic recombination and DNA repair, while the RuvA-RuvB complex plays an important role in the rescue of blocked DNA replication forks via replication fork reversal (RFR). RuvA specifically binds to HJ cruciform DNA, conferring on it an open structure. The RuvB hexamer acts as an ATP-dependent pump, pulling dsDNA into and through the RuvAB complex. HJ branch migration allows RuvC to scan DNA until it finds its consensus sequence, where it cleaves and resolves the cruciform DNA. This chain is Holliday junction branch migration complex subunit RuvA, found in Rickettsia prowazekii (strain Madrid E).